A 157-amino-acid polypeptide reads, in one-letter code: Ribosomal RNA large subunit methyltransferase H (157 aa).

S-adenosyl-L-methionine contacts are provided by residues leucine 73, glycine 105, and 124–129 (LSLMTF).

This sequence belongs to the RNA methyltransferase RlmH family. In terms of assembly, homodimer.

The protein localises to the cytoplasm. It catalyses the reaction pseudouridine(1915) in 23S rRNA + S-adenosyl-L-methionine = N(3)-methylpseudouridine(1915) in 23S rRNA + S-adenosyl-L-homocysteine + H(+). In terms of biological role, specifically methylates the pseudouridine at position 1915 (m3Psi1915) in 23S rRNA. The protein is Ribosomal RNA large subunit methyltransferase H of Flavobacterium johnsoniae (strain ATCC 17061 / DSM 2064 / JCM 8514 / BCRC 14874 / CCUG 350202 / NBRC 14942 / NCIMB 11054 / UW101) (Cytophaga johnsonae).